The sequence spans 668 residues: Ras guanine nucleotide exchange factor D (668 aa).

Residues 27–224 (KKLESIFGIA…LMVMDIDEFD (198 aa)) enclose the Rho-GAP domain. Positions 237 to 362 (GESIVKAATF…YFQTFFKPVI (126 aa)) constitute an N-terminal Ras-GEF domain. The region spanning 433–663 (GSNIIAQQIT…HSISHKLEPR (231 aa)) is the Ras-GEF domain.

Promotes the exchange of Ras-bound GDP by GTP. This is Ras guanine nucleotide exchange factor D (gefD) from Dictyostelium discoideum (Social amoeba).